Here is an 87-residue protein sequence, read N- to C-terminus: Small ribosomal subunit protein bS20 (87 aa).

The disordered stretch occupies residues 1 to 28 (MANSAQARKRARQASAQRDHNMSQRSEL). A compositionally biased stretch (basic and acidic residues) spans 17 to 28 (QRDHNMSQRSEL).

Belongs to the bacterial ribosomal protein bS20 family.

In terms of biological role, binds directly to 16S ribosomal RNA. This is Small ribosomal subunit protein bS20 from Thiobacillus denitrificans (strain ATCC 25259 / T1).